Reading from the N-terminus, the 178-residue chain is Protein SPEAR1 (178 aa).

2 disordered regions span residues 1–48 (MGST…QRGL) and 139–178 (HFLNEDPSSTTRRSKSLGSGIQHSGSSENQEVDLELRLSL). Residues 14-28 (SSPPSSSPTSSSSSP) are compositionally biased toward low complexity. Positions 46 to 54 (RGLGVAQLE) match the SPL motif. Polar residues predominate over residues 144–167 (DPSSTTRRSKSLGSGIQHSGSSEN). The EAR signature appears at 170–176 (VDLELRL).

Interacts with SPL and SPEAR2. As to expression, not detected in leaves.

In terms of biological role, adapter-like transcriptional repressor recruiting TPL/TPR corepressors to inhibit TCP transcription factors. The polypeptide is Protein SPEAR1 (Arabidopsis thaliana (Mouse-ear cress)).